The sequence spans 1241 residues: Sterol 3-beta-glucosyltransferase (1241 aa).

Over residues M1–C11 the composition is skewed to acidic residues. Disordered stretches follow at residues M1–I97 and D124–K189. The span at P25–S34 shows a compositional bias: basic and acidic residues. Residues E136 to D155 are compositionally biased toward acidic residues. Residues N220–K267 form the GRAM 1 domain. Residues S271–F373 form the PH domain. The segment at D499–T556 is disordered. Residues D516–E527 are compositionally biased toward acidic residues. Over residues A540–S549 the composition is skewed to basic and acidic residues. Residues E609–K675 enclose the GRAM 2 domain. Positions K720–L741 are disordered. A compositionally biased stretch (polar residues) spans T723–L741. 12 residues coordinate UDP-alpha-D-glucose: S797, R798, D800, N1071, V1098, H1100, H1113, S1116, G1117, T1118, D1137, and Q1138.

The protein belongs to the glycosyltransferase 28 family.

Its subcellular location is the cytoplasm. The protein localises to the preautophagosomal structure membrane. It carries out the reaction a sterol + UDP-alpha-D-glucose = a sterol 3-beta-D-glucoside + UDP + H(+). It catalyses the reaction ergosterol + UDP-alpha-D-glucose = ergosteryl 3-beta-D-glucoside + UDP + H(+). Sterol glycosyltransferase responsible for the glycosylation of ergosterol to form ergosterol-glucoside. Mediates autophagic degradation of peroxisomes (pexophagy). The protein is Sterol 3-beta-glucosyltransferase of Pichia angusta (Yeast).